The following is a 293-amino-acid chain: Glutamyl-Q tRNA(Asp) synthetase (293 aa).

Residues 9–13 and Glu-45 each bind L-glutamate; that span reads RFAPS. The short motif at 12 to 22 is the 'HIGH' region element; it reads PSPSGSLHFGS. Residues Cys-101, Cys-103, Tyr-115, and Cys-119 each coordinate Zn(2+). Residues Tyr-172 and Arg-190 each coordinate L-glutamate. Positions 228–232 match the 'KMSKS' region motif; sequence KLSKQ. Lys-231 lines the ATP pocket.

This sequence belongs to the class-I aminoacyl-tRNA synthetase family. GluQ subfamily. Requires Zn(2+) as cofactor.

Catalyzes the tRNA-independent activation of glutamate in presence of ATP and the subsequent transfer of glutamate onto a tRNA(Asp). Glutamate is transferred on the 2-amino-5-(4,5-dihydroxy-2-cyclopenten-1-yl) moiety of the queuosine in the wobble position of the QUC anticodon. The protein is Glutamyl-Q tRNA(Asp) synthetase of Shewanella frigidimarina (strain NCIMB 400).